The primary structure comprises 162 residues: Podoplanin (162 aa).

A signal peptide spans Met-1 to Gly-22. The tract at residues Ala-23–Glu-57 is disordered. Residues Ala-23–Leu-131 lie on the Extracellular side of the membrane. O-linked (GalNAc...) threonine glycans are attached at residues Thr-25, Thr-32, Thr-34, Thr-35, Thr-52, Thr-55, Thr-65, Thr-66, Thr-76, and Thr-85. Residues Thr-85–His-108 show a composition bias toward polar residues. Positions Thr-85–Thr-119 are disordered. O-linked (GalNAc...) serine glycosylation is found at Ser-86 and Ser-88. O-linked (GalNAc...) threonine glycosylation is present at Thr-89. 2 O-linked (GalNAc...) serine glycosylation sites follow: Ser-96 and Ser-98. Thr-100 carries O-linked (GalNAc...) threonine glycosylation. Ser-102 carries an O-linked (GalNAc...) serine glycan. O-linked (GalNAc...) threonine glycosylation occurs at Thr-106. Ser-107 and Ser-109 each carry an O-linked (GalNAc...) serine glycan. A compositionally biased stretch (basic and acidic residues) spans Ser-109–Thr-119. O-linked (GalNAc...) threonine glycans are attached at residues Thr-110, Thr-117, Thr-119, and Thr-120. The chain crosses the membrane as a helical span at residues Val-132–Val-152. A requires for dimerization and lipid rafts association region spans residues Gly-133–Gly-137. Over Met-153–Pro-162 the chain is Cytoplasmic. Residues Arg-154–Lys-155 are requires for interaction with MSN and EZR.

It belongs to the podoplanin family. Homodimer. Interacts with CLEC1B; the interaction is independent of CLEC1B glycosylation and activates CLEC1B; the interaction is dependent of sialic acid on O-glycans. Interacts with CD9; this interaction is homophilic and attenuates platelet aggregation and pulmonary metastasis induced by PDPN. Interacts with LGALS8; the interaction is glycosylation-dependent; may participate in connection of the lymphatic endothelium to the surrounding extracellular matrix. Interacts with HSPA9. Interacts (via extracellular domain) with CD44; this interaction is required for PDPN-mediated directional migration and regulation of lamellipodia extension/stabilization during cell spreading and migration. Interacts (via cytoplasmic domain) with MSN and EZR; activates RHOA and promotes epithelial-mesenchymal transition. Interacts with CCL21; relocalized PDPN to the basolateral membrane. Extensively O-glycosylated. Contains sialic acid residues. O-glycosylation is necessary for platelet aggregation activity. Disialylated at Thr-52; sialic acid is critical for platelet-aggregating activity and for CLEC1B interaction. In terms of processing, the N-terminus is blocked. Post-translationally, cleaved by a metalloprotease within its extracellular (EC) domain, generating a membrane-bound C-terminal fragment (PCTF33) and an extracellular fragment. The resulting membrane-bound C-terminal fragment (PCTF33) is further processed between Val-150 and Val-151 by PSEN1/gamma-secretase generating the intracellular domain of podoplanin (PICD). As to expression, highly expressed in placenta, lung, skeletal muscle and brain. Weakly expressed in brain, kidney and liver. In placenta, expressed on the apical plasma membrane of endothelium. In lung, expressed in alveolar epithelium. Up-regulated in colorectal tumors and expressed in 25% of early oral squamous cell carcinomas.

Its subcellular location is the membrane. It is found in the cell projection. It localises to the lamellipodium membrane. The protein localises to the filopodium membrane. The protein resides in the microvillus membrane. Its subcellular location is the ruffle membrane. It is found in the membrane raft. It localises to the apical cell membrane. The protein localises to the basolateral cell membrane. The protein resides in the invadopodium. Its subcellular location is the cytoplasm. It is found in the cytosol. In terms of biological role, mediates effects on cell migration and adhesion through its different partners. During development plays a role in blood and lymphatic vessels separation by binding CLEC1B, triggering CLEC1B activation in platelets and leading to platelet activation and/or aggregation. Interaction with CD9, on the contrary, attenuates platelet aggregation induced by PDPN. Through MSN or EZR interaction promotes epithelial-mesenchymal transition (EMT) leading to ERZ phosphorylation and triggering RHOA activation leading to cell migration increase and invasiveness. Interaction with CD44 promotes directional cell migration in epithelial and tumor cells. In lymph nodes (LNs), controls fibroblastic reticular cells (FRCs) adhesion to the extracellular matrix (ECM) and contraction of the actomyosin by maintaining ERM proteins (EZR; MSN and RDX) and MYL9 activation through association with unknown transmembrane proteins. Engagement of CLEC1B by PDPN promotes FRCs relaxation by blocking lateral membrane interactions leading to reduction of ERM proteins (EZR; MSN and RDX) and MYL9 activation. Through binding with LGALS8 may participate in connection of the lymphatic endothelium to the surrounding extracellular matrix. In keratinocytes, induces changes in cell morphology showing an elongated shape, numerous membrane protrusions, major reorganization of the actin cytoskeleton, increased motility and decreased cell adhesion. Controls invadopodia stability and maturation leading to efficient degradation of the extracellular matrix (ECM) in tumor cells through modulation of RHOC activity in order to activate ROCK1/ROCK2 and LIMK1/LIMK2 and inactivation of CFL1. Required for normal lung cell proliferation and alveolus formation at birth. Does not function as a water channel or as a regulator of aquaporin-type water channels. Does not have any effect on folic acid or amino acid transport. This Homo sapiens (Human) protein is Podoplanin.